A 547-amino-acid polypeptide reads, in one-letter code: Vacuolar fusion protein MON1 homolog B (547 aa).

At M1 the chain carries N-acetylmethionine. The interval 1-106 (MEAGGDTAAP…GGDPSDEEWR (106 aa)) is disordered. The segment covering 57–66 (PPSPSPPPQS) has biased composition (pro residues). 2 positions are modified to phosphoserine: S59 and S61.

This sequence belongs to the MON1/SAND family. As to quaternary structure, interacts with CCNT2; down-regulates CCNT2-mediated activation of viral promoters during herpes simplex virus 1/HHV-1 infection. Found in a complex with RMC1, CCZ1 MON1A and MON1B.

This Macaca fascicularis (Crab-eating macaque) protein is Vacuolar fusion protein MON1 homolog B (MON1B).